The chain runs to 2789 residues: Multiple epidermal growth factor-like domains protein 8 (2789 aa).

The signal sequence occupies residues 1 to 27; it reads MALGGALALALALALAVLGPLSLRVLA. Residues 28–2591 are Extracellular-facing; the sequence is GDCKGQRQVL…FFRQDQAHID (2564 aa). Disulfide bonds link cysteine 30/cysteine 57, cysteine 142/cysteine 152, cysteine 146/cysteine 158, cysteine 174/cysteine 184, cysteine 178/cysteine 191, and cysteine 193/cysteine 202. One can recognise a CUB 1 domain in the interval 30–140; that stretch reads CKGQRQVLRE…LGFNASFRFS (111 aa). N-linked (GlcNAc...) asparagine glycosylation is present at asparagine 50. EGF-like domains lie at 138–168 and 170–203; these read RFSLCPGGCQNHGQCKSPGVCVCEPGWGGPD and GLQECSAYCGSHGTCASTLGPCRCEPGFLGRACD. 6 Kelch repeats span residues 241–287, 290–338, 346–399, 402–453, 459–511, and 525–575; these read LLAV…AVAW, LLVL…AGHA, WLYV…FHAP, TLLV…FHTA, YMVV…APPS, and VLLV…SRDP. PSI domains are found at residues 561–613, 847–899, and 900–947; these read YCSM…SDCQ, ACTS…ALCP, and LCEE…EECP. Asparagine 1048 is a glycosylation site (N-linked (GlcNAc...) asparagine). The EGF-like 3; calcium-binding domain maps to 1074-1115; sequence DVDECRLGLARCHPRATCLNTPLSYECHCQRGYQGDGITHCN. Intrachain disulfides connect cysteine 1078-cysteine 1091, cysteine 1085-cysteine 1100, cysteine 1102-cysteine 1114, cysteine 1163-cysteine 1171, cysteine 1165-cysteine 1179, cysteine 1182-cysteine 1191, cysteine 1194-cysteine 1208, cysteine 1211-cysteine 1224, cysteine 1213-cysteine 1231, cysteine 1233-cysteine 1242, cysteine 1245-cysteine 1259, cysteine 1263-cysteine 1302, cysteine 1336-cysteine 1367, cysteine 1407-cysteine 1421, cysteine 1415-cysteine 1433, and cysteine 1435-cysteine 1444. Laminin EGF-like domains follow at residues 1163–1210 and 1211–1261; these read CGCS…GCRP and CQCN…SCFR. Asparagine 1226 is a glycosylation site (N-linked (GlcNAc...) asparagine). The CUB 2 domain occupies 1263–1405; sequence CGGRALLTNV…WGFNASVGSA (143 aa). Asparagine 1271 carries an N-linked (GlcNAc...) asparagine glycan. Phosphothreonine is present on threonine 1353. Residues 1403 to 1445 form the EGF-like 4 domain; sequence GSARCGSGGPGSCPVPQECVPQDGAAGAGLCRCPQGWAGPHCR. Kelch repeat units lie at residues 1522–1570, 1580–1629, 1632–1679, 1685–1735, 1740–1787, and 1796–1841; these read TLWM…SFHA, AMYL…TARR, SLLL…SAVY, SLYV…HASA, TMVV…ESVA, and RLYI…WCHG. 4 PSI domains span residues 1820 to 1860, 1868 to 1923, 2004 to 2062, and 2064 to 2121; these read PCRL…PPCS, ECRR…NDCR, PCHL…ESCS, and GCAQ…LSCP. The N-linked (GlcNAc...) asparagine glycan is linked to asparagine 2010. In terms of domain architecture, EGF-like 5 spans 2122–2160; the sequence is PEDECANGHHDCNETQNCHDQPHGYECSCKTGYTMDNVT. 2 disulfide bridges follow: cysteine 2126/cysteine 2139 and cysteine 2133/cysteine 2148. 2 N-linked (GlcNAc...) asparagine glycosylation sites follow: asparagine 2158 and asparagine 2173. 8 disulfide bridges follow: cysteine 2197–cysteine 2205, cysteine 2199–cysteine 2214, cysteine 2217–cysteine 2226, cysteine 2229–cysteine 2243, cysteine 2324–cysteine 2333, cysteine 2326–cysteine 2341, cysteine 2343–cysteine 2368, and cysteine 2371–cysteine 2385. Laminin EGF-like domains follow at residues 2197–2245 and 2324–2387; these read CRCN…TCRP and CQCN…QCYR. The disordered stretch occupies residues 2468–2508; that stretch reads VHIQPPPPPPPPPPPADGVPRVAADLGGLGTGSGSGSPVEP. Positions 2471-2484 are enriched in pro residues; the sequence is QPPPPPPPPPPPAD. The chain crosses the membrane as a helical span at residues 2592–2612; the sequence is LFVFFSVFFSCFFLFLSLCVL. At 2613–2789 the chain is on the cytoplasmic side; it reads LWKAKQALDQ…SQDNLTSMSL (177 aa). Positions 2762-2776 are enriched in gly residues; sequence GGAGGSGHGGGGGRK. Residues 2762-2789 are disordered; that stretch reads GGAGGSGHGGGGGRKGLLSQDNLTSMSL. Polar residues predominate over residues 2780-2789; it reads SQDNLTSMSL.

As to expression, highest expression in brain, testis and kidney.

The protein localises to the membrane. Acts as a negative regulator of hedgehog signaling. This Mus musculus (Mouse) protein is Multiple epidermal growth factor-like domains protein 8 (Megf8).